The chain runs to 284 residues: Tropomyosin (284 aa).

Positions 1 to 284 form a coiled coil; sequence MDAIKKKMQA…DQTFAEIAGY (284 aa). A disordered region spans residues 103-133; that stretch reads EEKLATTTEKLEEASKAADESERNRKVLEGR.

Belongs to the tropomyosin family. Homodimer.

Its function is as follows. Tropomyosin, in association with the troponin complex, plays a central role in the calcium dependent regulation of muscle contraction. This is Tropomyosin from Chlamys nipponensis akazara (Akazara scallop).